Reading from the N-terminus, the 571-residue chain is Protein PNS1 (571 aa).

The tract at residues 1-96 (MNDEEKHLAA…PDFPPDYNYK (96 aa)) is disordered. The Cytoplasmic portion of the chain corresponds to 1 to 118 (MNDEEKHLAA…AVPKPKWNDK (118 aa)). A compositionally biased stretch (polar residues) spans 15–31 (YQPNMHYQQQQEKQTGY). Low complexity-rich tracts occupy residues 39-52 (QGGY…DYYN) and 71-80 (GNPNDNYNNQ). Positions 81 to 90 (QPPPYTPDFP) are enriched in pro residues. Residues 119–139 (IGLVILALIFSGYLALSIIVI) form a helical membrane-spanning segment. Residues 140–166 (RAYAQTHSFQGWGIYSGENDYSLNTHT) are Extracellular-facing. Residues 167-187 (LILYAFVLATAMVLSLLYFIA) traverse the membrane as a helical segment. Topologically, residues 188–189 (AR) are cytoplasmic. A helical membrane pass occupies residues 190-210 (VWTKQFIWITYILHLLFSWGT). Residue Ala-211 is a topological domain, extracellular. Residues 212-232 (IYYLVVGYYSAGIVFIVFAAL) traverse the membrane as a helical segment. Topologically, residues 233 to 263 (TTWWFWCSRKRIPFATIVLQTLIDVTRANPS) are cytoplasmic. A helical membrane pass occupies residues 264–284 (VLVISAVGTVVGACFGTWFSF). Residues 285-311 (TIVSIYVKYDPDNRNPGCMTTGGSCSN) lie on the Extracellular side of the membrane. Residues 312–332 (GKLIGLILFAIFCGYYLTEVI) form a helical membrane-spanning segment. Topologically, residues 333 to 369 (KNVIHVTISGVYGSWYYCSKSDQGMPKHAAMSSFRRA) are cytoplasmic. A helical membrane pass occupies residues 370 to 390 (VTYSLGSISLGSLIVSIINFI). At 391-406 (RQILSVLQQDARQSGD) the chain is on the extracellular side. A helical transmembrane segment spans residues 407–427 (TLATVLLCFVQCCFGVLDWLV). The Cytoplasmic portion of the chain corresponds to 428–472 (TYFNHYAYSYIALYGKAYVPSAKATWKLMQTRGIDAMVNDSLIGS). The helical transmembrane segment at 473 to 493 (VLSFGASFVAYAAALVAYCFL) threads the bilayer. Residues 494-503 (KYTDPSYNSG) are Extracellular-facing. A helical transmembrane segment spans residues 504–524 (GGFYAPVVGLAFVIALQVSNI). Residues 525-571 (TNVSLKSGCSTFFLALARDPEVLRVSYPQIYEEICRTYPPARDKLDI) lie on the Cytoplasmic side of the membrane.

The protein belongs to the CTL (choline transporter-like) family.

The protein localises to the cell membrane. Probably involved in transport through the plasma membrane. The sequence is that of Protein PNS1 (PNS1) from Yarrowia lipolytica (strain CLIB 122 / E 150) (Yeast).